The sequence spans 166 residues: Putative 4-hydroxy-4-methyl-2-oxoglutarate aldolase (166 aa).

Substrate is bound by residues 74–77 (GDQI) and Arg-96. Asp-97 contributes to the a divalent metal cation binding site.

The protein belongs to the class II aldolase/RraA-like family. In terms of assembly, homotrimer. Requires a divalent metal cation as cofactor.

The catalysed reaction is 4-hydroxy-4-methyl-2-oxoglutarate = 2 pyruvate. It catalyses the reaction oxaloacetate + H(+) = pyruvate + CO2. Catalyzes the aldol cleavage of 4-hydroxy-4-methyl-2-oxoglutarate (HMG) into 2 molecules of pyruvate. Also contains a secondary oxaloacetate (OAA) decarboxylase activity due to the common pyruvate enolate transition state formed following C-C bond cleavage in the retro-aldol and decarboxylation reactions. The protein is Putative 4-hydroxy-4-methyl-2-oxoglutarate aldolase of Xanthomonas campestris pv. campestris (strain 8004).